Consider the following 736-residue polypeptide: 1,4-alpha-glucan branching enzyme GlgB (736 aa).

The Nucleophile role is filled by Asp-415. Catalysis depends on Glu-470, which acts as the Proton donor.

The protein belongs to the glycosyl hydrolase 13 family. GlgB subfamily. Monomer.

The catalysed reaction is Transfers a segment of a (1-&gt;4)-alpha-D-glucan chain to a primary hydroxy group in a similar glucan chain.. Its pathway is glycan biosynthesis; glycogen biosynthesis. Functionally, catalyzes the formation of the alpha-1,6-glucosidic linkages in glycogen by scission of a 1,4-alpha-linked oligosaccharide from growing alpha-1,4-glucan chains and the subsequent attachment of the oligosaccharide to the alpha-1,6 position. The chain is 1,4-alpha-glucan branching enzyme GlgB from Burkholderia orbicola (strain AU 1054).